A 394-amino-acid polypeptide reads, in one-letter code: MKREVYLDYAATTPLRKEVYEAMKPFLKEKFGNPSSIHHFGRETRTAIEEAREKIAKAIGAKSDEIIFTSGGTESNNMAIKGVAFALSTKGKHIITSKVEHHAVLEPCHFLEKLGFEITYLPVDREGFVDPDDLKKALRKDTILISIMHANNEIGTIEPIQELSKIAKEYDIYFHTDAVQTVGHIPVNVDELGVDLLSISAHKFYGPKGVGALYIRKGTKIHPLIHGGSQENNKRAGTENVAGIIGMGKAIELAILEMDKEIERLTELRDYFIREVEKRISDVYLNGPRSNRLPNNINFSFAYVEGESILLHLDLEGVEVSTGSACSSSSLEPSHVLSAINVPIELAHGSIRFTLGLYTTKEDLNYTLDVLERIIEKLRTISPYKQEWKINKKS.

Pyridoxal 5'-phosphate-binding positions include 72–73 (GT), Asn152, Gln180, and 200–202 (SAH). At Lys203 the chain carries N6-(pyridoxal phosphate)lysine. Pyridoxal 5'-phosphate is bound at residue Thr238. Cys326 acts as the Cysteine persulfide intermediate in catalysis. Residue Cys326 participates in [2Fe-2S] cluster binding.

The protein belongs to the class-V pyridoxal-phosphate-dependent aminotransferase family. NifS/IscS subfamily. As to quaternary structure, homodimer. Forms a heterotetramer with IscU, interacts with other sulfur acceptors. Pyridoxal 5'-phosphate is required as a cofactor.

It is found in the cytoplasm. It carries out the reaction (sulfur carrier)-H + L-cysteine = (sulfur carrier)-SH + L-alanine. It functions in the pathway cofactor biosynthesis; iron-sulfur cluster biosynthesis. In terms of biological role, master enzyme that delivers sulfur to a number of partners involved in Fe-S cluster assembly, tRNA modification or cofactor biosynthesis. Catalyzes the removal of elemental sulfur atoms from cysteine to produce alanine. Functions as a sulfur delivery protein for Fe-S cluster synthesis onto IscU, an Fe-S scaffold assembly protein, as well as other S acceptor proteins. In Dictyoglomus turgidum (strain DSM 6724 / Z-1310), this protein is Cysteine desulfurase IscS.